The sequence spans 719 residues: MAEEYELNEIDDTLHGSVGSRLSLFARELKSRRSSSWHGGTALRLPKDLYESLVIHPNGRWYRIWANMMFLWSIYSTFFTPFEFSFFRGLPDQLLDLECVQLVFLADVAVHFFLAYRDPHTYRMVHDKRHIALRYIKGSFALDVLGCFPWDAIYKVTGRVEAVRWLVWVRLYRGRKVMAFFKRVEKDIRVSYLLTRIVKLITVELYCTHTAACGFYYLATTLPPAREGGTWIGSLSLGDARYINFREVDLLTRYVTSLYLAIVTMATVGYGDIHAVNTREMAFTVVYISFSIVLSAYLIGNMTALIVKGSRTERFRDRMTDLIRYMNRNRLGSAIRSQVKDHLMLQYESSYTRDRVIVDDIPVAVRSKMSQTLYLDMVSRVGLFRGCSDDFLSQIVLKLHEEFFLPGEVILEQGTVVDQIYIVAHGCLEEVANGEDGSEEIISELRPYGIVGDVAVICNIPQPYTVRVCELCSLLRIDKQSLTSILQIYFKDNSQILSNLLKGKETESKRKQLESDITYLLAKQESELVLGVNNAAYHGDIFRLKSLISAGADPSKSDYDGRTALHIAALRGYENIVRFLIQRGANVNSIDRFGNSPLLQAVKSGHDRITSLLVEHGAILNLEDAGGYLCRVVRGGRIDLLKKLLRFGISPNCRNYDQRTPLHIAAAEGLHLVASTLIESGADIQAKDRWGNTPLDEGRRCSSKPLVRILEQARTVATN.

The Cytoplasmic segment spans residues 1-63 (MAEEYELNEI…VIHPNGRWYR (63 aa)). Residues 64 to 84 (IWANMMFLWSIYSTFFTPFEF) form a helical membrane-spanning segment. The Extracellular segment spans residues 85-93 (SFFRGLPDQ). Residues 94–114 (LLDLECVQLVFLADVAVHFFL) form a helical membrane-spanning segment. Over 115 to 137 (AYRDPHTYRMVHDKRHIALRYIK) the chain is Cytoplasmic. A helical transmembrane segment spans residues 138-158 (GSFALDVLGCFPWDAIYKVTG). The Extracellular segment spans residues 159 to 164 (RVEAVR). The helical; Voltage-sensor transmembrane segment at 165–185 (WLVWVRLYRGRKVMAFFKRVE) threads the bilayer. Over 186–199 (KDIRVSYLLTRIVK) the chain is Cytoplasmic. Residues 200 to 220 (LITVELYCTHTAACGFYYLAT) form a helical membrane-spanning segment. Over 221–255 (TLPPAREGGTWIGSLSLGDARYINFREVDLLTRYV) the chain is Extracellular. The pore-forming intramembrane region spans 256-275 (TSLYLAIVTMATVGYGDIHA). The Extracellular segment spans residues 276-285 (VNTREMAFTV). The chain crosses the membrane as a helical span at residues 286-306 (VYISFSIVLSAYLIGNMTALI). The Cytoplasmic portion of the chain corresponds to 307-719 (VKGSRTERFR…LEQARTVATN (413 aa)). 383–503 (LFRGCSDDFL…SQILSNLLKG (121 aa)) lines the a nucleoside 3',5'-cyclic phosphate pocket. 5 ANK repeats span residues 523–556 (KQES…DPSK), 560–589 (DGRT…NVNS), 593–622 (FGNS…ILNL), 624–653 (DAGG…SPNC), and 657–686 (DQRT…DIQA).

It belongs to the potassium channel family. Plant (TC 1.A.1.4) subfamily.

It is found in the membrane. Functionally, probable outward-rectifying potassium channel. The sequence is that of Potassium channel KOR2 from Oryza sativa subsp. japonica (Rice).